A 173-amino-acid polypeptide reads, in one-letter code: uncharacterized protein (173 aa).

The N-acetyltransferase domain maps to 2-171 (VTVREAKLED…PDLSALKTLL (170 aa)).

The protein belongs to the acetyltransferase family.

This is an uncharacterized protein from Bacillus subtilis (strain 168).